Consider the following 890-residue polypeptide: Alanine--tRNA ligase (890 aa).

Residues His-578, His-582, Cys-689, and His-693 each contribute to the Zn(2+) site.

It belongs to the class-II aminoacyl-tRNA synthetase family. Requires Zn(2+) as cofactor.

It is found in the cytoplasm. It carries out the reaction tRNA(Ala) + L-alanine + ATP = L-alanyl-tRNA(Ala) + AMP + diphosphate. Catalyzes the attachment of alanine to tRNA(Ala) in a two-step reaction: alanine is first activated by ATP to form Ala-AMP and then transferred to the acceptor end of tRNA(Ala). Also edits incorrectly charged Ser-tRNA(Ala) and Gly-tRNA(Ala) via its editing domain. This is Alanine--tRNA ligase from Deinococcus radiodurans (strain ATCC 13939 / DSM 20539 / JCM 16871 / CCUG 27074 / LMG 4051 / NBRC 15346 / NCIMB 9279 / VKM B-1422 / R1).